Consider the following 332-residue polypeptide: Beta-ketoacyl-[acyl-carrier-protein] synthase III (332 aa).

Catalysis depends on residues C112 and H252. Residues 253–257 (QANLR) are ACP-binding. N282 is an active-site residue.

It belongs to the thiolase-like superfamily. FabH family. Homodimer.

The protein localises to the cytoplasm. It catalyses the reaction malonyl-[ACP] + acetyl-CoA + H(+) = 3-oxobutanoyl-[ACP] + CO2 + CoA. It participates in lipid metabolism; fatty acid biosynthesis. Functionally, catalyzes the condensation reaction of fatty acid synthesis by the addition to an acyl acceptor of two carbons from malonyl-ACP. Catalyzes the first condensation reaction which initiates fatty acid synthesis and may therefore play a role in governing the total rate of fatty acid production. Possesses both acetoacetyl-ACP synthase and acetyl transacylase activities. Its substrate specificity determines the biosynthesis of branched-chain and/or straight-chain of fatty acids. The polypeptide is Beta-ketoacyl-[acyl-carrier-protein] synthase III (Syntrophomonas wolfei subsp. wolfei (strain DSM 2245B / Goettingen)).